The chain runs to 297 residues: Thoeris protein ThsA (297 aa).

Helical transmembrane passes span 32–52 (ALSI…FLDL) and 57–77 (RLII…VQFI).

It is found in the cell membrane. With respect to regulation, activated by a signal molecule generated by ThsB. Its function is as follows. Probable membrane protein component of the Thoeris antiviral defense system, composed of ThsA and ThsB. Expression of ThsA and ThsB in B.subtilis (strain BEST7003) confers resistance to phages SBSphiC, SBSphiJ and SPO1. Activation by a signal generated by ThsB leads to phage resistance. This is Thoeris protein ThsA from Bacillus amyloliquefaciens (strain Y2) (Bacillus amyloliquefaciens subsp. plantarum (strain B9601-Y2)).